Here is a 101-residue protein sequence, read N- to C-terminus: Ubiquitin-related modifier 1 (101 aa).

The residue at position 101 (G101) is a 1-thioglycine. Residue G101 forms a Glycyl lysine isopeptide (Gly-Lys) (interchain with K-? in acceptor proteins) linkage.

It belongs to the URM1 family. As to quaternary structure, component of a complex at least composed of URM1, CTU2/NCS2 and CTU1/ATPBD3. In terms of processing, C-terminal thiocarboxylation occurs in 2 steps, it is first acyl-adenylated (-COAMP) via the hesA/moeB/thiF part of MOCS3, then thiocarboxylated (-COSH) via the rhodanese domain of MOCS3.

The protein resides in the cytoplasm. It functions in the pathway tRNA modification; 5-methoxycarbonylmethyl-2-thiouridine-tRNA biosynthesis. Its function is as follows. Acts as a sulfur carrier required for 2-thiolation of mcm(5)S(2)U at tRNA wobble positions of cytosolic tRNA(Lys), tRNA(Glu) and tRNA(Gln). Serves as sulfur donor in tRNA 2-thiolation reaction by being thiocarboxylated (-COSH) at its C-terminus by MOCS3. The sulfur is then transferred to tRNA to form 2-thiolation of mcm(5)S(2)U. Also acts as a ubiquitin-like protein (UBL) that is covalently conjugated via an isopeptide bond to lysine residues of target proteins such as MOCS3, ATPBD3, CTU2, USP15 and CAS. The thiocarboxylated form serves as substrate for conjugation and oxidative stress specifically induces the formation of UBL-protein conjugates. In Bos taurus (Bovine), this protein is Ubiquitin-related modifier 1.